Here is a 714-residue protein sequence, read N- to C-terminus: Methyl-accepting chemotaxis protein TlpQ (714 aa).

The helical transmembrane segment at 12 to 32 (ITLLAGLCLLGVVALLVGLSV) threads the bilayer. One can recognise a Cache domain in the interval 50-290 (LDESARLRLE…LLGKNLAKAD (241 aa)). Histamine is bound by residues E170, 208–210 (YFD), and D239. Residues 360–380 (TWVELGLGLGAAVLGLLVLWL) form a helical membrane-spanning segment. One can recognise an HAMP domain in the interval 383 to 437 (RGVTRPILGVAHMLRDIASGEGDLTQRLPHTGRDELGELAGWFNRFLDKLQPIIR). One can recognise a Methyl-accepting transducer domain in the interval 442–678 (SVRDARSTAD…EINRNVAAIR (237 aa)).

This sequence belongs to the methyl-accepting chemotaxis (MCP) protein family. As to quaternary structure, homotetramer.

Its subcellular location is the cell membrane. In terms of biological role, chemotactic-signal transducers respond to changes in the concentration of attractants and repellents in the environment, transduce a signal from the outside to the inside of the cell, and facilitate sensory adaptation through the variation of the level of methylation. TlpQ is a chemoreceptor that binds and mediates chemotaxis to histamine, a key biological signaling molecule. It binds histamine with high affinity, which permits responses to very low histamine concentrations. Chemotaxis to histamine may play a role in the virulence of P.aeruginosa by recruiting cells at the infection site and consequently modulating the expression of quorum-sensing-dependent virulence genes. TlpQ also binds and mediates chemotaxis to polyamines such as putrescine, spermidine, cadaverine, agmatine and ethylenediamine. In addition, binds the quorum-sensing signal autoinducer 2 (AI-2), thus inducing chemotaxis toward AI-2 and biofilm formation. In Pseudomonas aeruginosa (strain ATCC 15692 / DSM 22644 / CIP 104116 / JCM 14847 / LMG 12228 / 1C / PRS 101 / PAO1), this protein is Methyl-accepting chemotaxis protein TlpQ.